The chain runs to 161 residues: Phosphopantetheine adenylyltransferase (161 aa).

A substrate-binding site is contributed by S9. ATP-binding positions include S9 to F10 and H17. Substrate contacts are provided by K41, T74, and R88. ATP contacts are provided by residues G89–R91, E99, and N124–S130.

It belongs to the bacterial CoaD family. In terms of assembly, homohexamer. Mg(2+) is required as a cofactor.

The protein localises to the cytoplasm. The enzyme catalyses (R)-4'-phosphopantetheine + ATP + H(+) = 3'-dephospho-CoA + diphosphate. The protein operates within cofactor biosynthesis; coenzyme A biosynthesis; CoA from (R)-pantothenate: step 4/5. Reversibly transfers an adenylyl group from ATP to 4'-phosphopantetheine, yielding dephospho-CoA (dPCoA) and pyrophosphate. The chain is Phosphopantetheine adenylyltransferase from Lactobacillus acidophilus (strain ATCC 700396 / NCK56 / N2 / NCFM).